A 485-amino-acid chain; its full sequence is Glutamyl-tRNA(Gln) amidotransferase subunit A (485 aa).

Catalysis depends on charge relay system residues Lys-79 and Ser-154. The active-site Acyl-ester intermediate is the Ser-178.

The protein belongs to the amidase family. GatA subfamily. As to quaternary structure, heterotrimer of A, B and C subunits.

It carries out the reaction L-glutamyl-tRNA(Gln) + L-glutamine + ATP + H2O = L-glutaminyl-tRNA(Gln) + L-glutamate + ADP + phosphate + H(+). Functionally, allows the formation of correctly charged Gln-tRNA(Gln) through the transamidation of misacylated Glu-tRNA(Gln) in organisms which lack glutaminyl-tRNA synthetase. The reaction takes place in the presence of glutamine and ATP through an activated gamma-phospho-Glu-tRNA(Gln). This Clostridium botulinum (strain Okra / Type B1) protein is Glutamyl-tRNA(Gln) amidotransferase subunit A.